We begin with the raw amino-acid sequence, 206 residues long: Ephrin-A4 (206 aa).

An N-terminal signal peptide occupies residues M1 to S25. The Ephrin RBD domain maps to L26–E158. The N-linked (GlcNAc...) asparagine glycan is linked to N33. Residues R41 to D43 carry the Cell attachment site motif. Cystine bridges form between C58–C99 and C86–C147. N-linked (GlcNAc...) asparagine glycosylation occurs at N98. Residues S161–W180 form a disordered region. S175 carries the GPI-anchor amidated serine lipid modification. Positions G176 to L206 are cleaved as a propeptide — removed in mature form.

It belongs to the ephrin family. In terms of tissue distribution, expressed in myogenic progenitor cells.

It is found in the cell membrane. Its function is as follows. Cell surface GPI-bound ligand for Eph receptors, a family of receptor tyrosine kinases which are crucial for migration, repulsion and adhesion during neuronal, vascular and epithelial development. Binds promiscuously Eph receptors residing on adjacent cells, leading to contact-dependent bidirectional signaling into neighboring cells. May play a role in the interaction between activated B-lymphocytes and dendritic cells in tonsils. The protein is Ephrin-A4 (Efna4) of Mus musculus (Mouse).